The following is a 229-amino-acid chain: Peroxiredoxin-like 2A (229 aa).

The thioredoxin fold stretch occupies residues 14 to 112; the sequence is MWSIGAGALG…DQLGVPLYAV (99 aa). Active-site redox-active residues include C85 and C88.

This sequence belongs to the peroxiredoxin-like PRXL2 family. PRXL2A subfamily. As to expression, expressed in CSF1 and TNFSF11-stimulated CD14(+) peripheral blood mononuclear cells (PBMCs).

The protein resides in the cytoplasm. It localises to the secreted. Involved in redox regulation of the cell. Acts as an antioxidant. Inhibits TNFSF11-induced NFKB1 and JUN activation and osteoclast differentiation. May affect bone resorption and help to maintain bone mass. Acts as a negative regulator of macrophage-mediated inflammation by inhibiting macrophage production of inflammatory cytokines, probably through suppression of the MAPK signaling pathway. This chain is Peroxiredoxin-like 2A, found in Homo sapiens (Human).